An 872-amino-acid chain; its full sequence is Alanine--tRNA ligase (872 aa).

The Zn(2+) site is built by His-567, His-571, Cys-669, and His-673.

It belongs to the class-II aminoacyl-tRNA synthetase family. It depends on Zn(2+) as a cofactor.

It localises to the cytoplasm. The catalysed reaction is tRNA(Ala) + L-alanine + ATP = L-alanyl-tRNA(Ala) + AMP + diphosphate. Functionally, catalyzes the attachment of alanine to tRNA(Ala) in a two-step reaction: alanine is first activated by ATP to form Ala-AMP and then transferred to the acceptor end of tRNA(Ala). Also edits incorrectly charged Ser-tRNA(Ala) and Gly-tRNA(Ala) via its editing domain. The protein is Alanine--tRNA ligase of Streptococcus pyogenes serotype M12 (strain MGAS2096).